A 51-amino-acid chain; its full sequence is Large ribosomal subunit protein eL39 (51 aa).

This sequence belongs to the eukaryotic ribosomal protein eL39 family.

This chain is Large ribosomal subunit protein eL39 (rpl39e), found in Aeropyrum pernix (strain ATCC 700893 / DSM 11879 / JCM 9820 / NBRC 100138 / K1).